A 379-amino-acid polypeptide reads, in one-letter code: Glutamate 5-kinase (379 aa).

K19 is an ATP binding site. Residues S59, D146, and N158 each contribute to the substrate site. 178–179 (TD) is a binding site for ATP. A PUA domain is found at 285 to 363 (RGAVTVDAGA…SEFERLLGYV (79 aa)).

It belongs to the glutamate 5-kinase family.

It localises to the cytoplasm. It carries out the reaction L-glutamate + ATP = L-glutamyl 5-phosphate + ADP. It participates in amino-acid biosynthesis; L-proline biosynthesis; L-glutamate 5-semialdehyde from L-glutamate: step 1/2. Its function is as follows. Catalyzes the transfer of a phosphate group to glutamate to form L-glutamate 5-phosphate. In Variovorax paradoxus (strain S110), this protein is Glutamate 5-kinase.